Consider the following 1038-residue polypeptide: Importin-7 (1038 aa).

N-acetylmethionine is present on methionine 1. Residues 22–101 (AERQLNEAHK…RENIVEAIIH (80 aa)) enclose the Importin N-terminal domain. The interval 881–910 (EHENDSDDDEDAEDDDETEELGSDEDDIDE) is disordered. The span at 884–910 (NDSDDDEDAEDDDETEELGSDEDDIDE) shows a compositional bias: acidic residues. Serine 886 is modified (phosphoserine). Threonine 898 carries the phosphothreonine modification. Phosphoserine occurs at positions 903 and 1020.

Belongs to the importin beta family. In terms of assembly, forms a heterodimer with KPNB1. Interacts with histone H1. Interacts with H2A, H2B, H3 and H4 histones. Interacts with SNUPN and XPO1. Interacts with RPS7 and RPL5. Interacts with RPL23A (via BIB domain). Binds directly to nuclear pore complexes. Interacts with SMAD4 and NUP93; translocates SMAD4 to the nucleus through the NPC upon BMP7 stimulation resulting in activation of SMAD4 signaling. Interacts with phosphorylated SMAD2; the interaction facilitates translocation of SMAD2 to the nucleus. Interacts with SRP19. Interacts with RUNX2; the interaction inhibits RUNX2 nuclear translocation in osteoblasts. Interacts with HDAC6, DLX3 and KLF4; the interaction facilitates HDAC6, DLX3 and KLF4 nuclear translocation in dental papilla cells.

The protein localises to the cytoplasm. It localises to the nucleus. In terms of biological role, functions in nuclear protein import, either by acting as autonomous nuclear transport receptor or as an adapter-like protein in association with the importin-beta subunit KPNB1. Acting autonomously is thought to serve itself as receptor for nuclear localization signals (NLS) and to promote translocation of import substrates through the nuclear pore complex (NPC) by an energy requiring, Ran-dependent mechanism. At the nucleoplasmic side of the NPC, Ran binds to importin, the importin/substrate complex dissociates and importin is re-exported from the nucleus to the cytoplasm where GTP hydrolysis releases Ran. Mediates autonomously the nuclear import of ribosomal proteins RPL23A, RPS7 and RPL5. In association with KPNB1 mediates the nuclear import of H1 histone and the Ran-binding site of IPO7 is not required but synergizes with that of KPNB1 in importin/substrate complex dissociation. Promotes odontoblast differentiation via promoting nuclear translocation of DLX3, KLF4, SMAD2, thereby facilitating the transcription of target genes that play a role in odontoblast differentiation. Facilitates BMP4-induced translocation of SMAD1 to the nucleus and recruitment to the MSX1 gene promoter, thereby promotes the expression of the odontogenic regulator MSX1 in dental mesenchymal cells. Also promotes odontoblast differentiation by facilitating the nuclear translocation of HDAC6 and subsequent repression of RUNX2 expression. Inhibits osteoblast differentiation by inhibiting nuclear translocation of RUNX2 and therefore inhibition of RUNX2 target gene transcription. In vitro, mediates nuclear import of H2A, H2B, H3 and H4 histones. The chain is Importin-7 (Ipo7) from Mus musculus (Mouse).